Reading from the N-terminus, the 168-residue chain is Dihydrofolate reductase (168 aa).

In terms of domain architecture, DHFR spans 1–159 (MISFIFAMDA…YDYEFLMYEK (159 aa)). A substrate-binding site is contributed by 5 to 7 (IFA). NADP(+)-binding positions include 6–7 (FA) and 14–19 (IGKDND). Substrate is bound at residue D27. 43–46 (GRKT) serves as a coordination point for NADP(+). R57 contributes to the substrate binding site. NADP(+) is bound by residues 62-65 (VTSA) and 95-100 (IGGAQL). T114 provides a ligand contact to substrate.

Belongs to the dihydrofolate reductase family.

The catalysed reaction is (6S)-5,6,7,8-tetrahydrofolate + NADP(+) = 7,8-dihydrofolate + NADPH + H(+). Its pathway is cofactor biosynthesis; tetrahydrofolate biosynthesis; 5,6,7,8-tetrahydrofolate from 7,8-dihydrofolate: step 1/1. Functionally, key enzyme in folate metabolism. Catalyzes an essential reaction for de novo glycine and purine synthesis, and for DNA precursor synthesis. The sequence is that of Dihydrofolate reductase (dfrA) from Bacillus subtilis (strain 168).